The following is a 290-amino-acid chain: Dehydrodolichyl diphosphate synthase CPT3 (290 aa).

Asp-42 is a catalytic residue.

This sequence belongs to the UPP synthase family. The cofactor is Mg(2+). In terms of tissue distribution, expressed in leaf trichomes and stem trichomes. Expressed at low levels in young leaves, stems and old leaves.

It localises to the cytoplasm. The protein resides in the cytosol. It carries out the reaction n isopentenyl diphosphate + (2E,6E)-farnesyl diphosphate = a di-trans,poly-cis-polyprenyl diphosphate + n diphosphate. Its function is as follows. Catalyzes cis-prenyl chain elongation to produce the polyprenyl backbone of dolichol, a glycosyl carrier-lipid required for the biosynthesis of several classes of glycoprotein. The chain is Dehydrodolichyl diphosphate synthase CPT3 from Solanum lycopersicum (Tomato).